Consider the following 122-residue polypeptide: MIQMQTKLKVADNSGGVKAMCIKVLGGSKRRYANIGDVIKVSIKEAASRGKVKKGDVYDAVVVRTAHGVRRSDGSCIRFDNNAIVLLNTKLEPIGTRIFGPVTRELRSAQFMKIVSLAPEVL.

This sequence belongs to the universal ribosomal protein uL14 family. As to quaternary structure, part of the 50S ribosomal subunit. Forms a cluster with proteins L3 and L19. In the 70S ribosome, L14 and L19 interact and together make contacts with the 16S rRNA in bridges B5 and B8.

Binds to 23S rRNA. Forms part of two intersubunit bridges in the 70S ribosome. The sequence is that of Large ribosomal subunit protein uL14 from Ruthia magnifica subsp. Calyptogena magnifica.